The following is a 321-amino-acid chain: Polygalacturonan/rhamnogalacturonan transport system permease protein YteP (321 aa).

Residues 1 to 144 enclose the ABC transmembrane type-1 domain; sequence MKTAEAQAPA…YIPHFMSWVI (144 aa). 3 consecutive transmembrane segments (helical) span residues 21–41, 63–83, and 123–143; these read RKRLLIKLIQQKYLYLMILPG, YQPFLGILGSEWVGLKHFIRL, and IALFKKFVQTLIYIPHFMSWV.

This sequence belongs to the binding-protein-dependent transport system permease family. As to quaternary structure, the complex is probably composed of two ATP-binding proteins (MsmX), two transmembrane proteins (YtcP and YteP) and a solute-binding protein (YtcQ).

The protein resides in the cell membrane. Functionally, involved in pectin degradation. Part of the ABC transporter complex YtcQP-YteP involved in the uptake of polygalacturonan and rhamnogalacturonan type I. Responsible for the translocation of the substrate across the membrane. The protein is Polygalacturonan/rhamnogalacturonan transport system permease protein YteP (yteP) of Bacillus subtilis (strain 168).